We begin with the raw amino-acid sequence, 304 residues long: Non-specific ribonucleoside hydrolase RihC (304 aa).

Residue H233 is part of the active site.

Belongs to the IUNH family. RihC subfamily.

Its function is as follows. Hydrolyzes both purine and pyrimidine ribonucleosides with a broad-substrate specificity. This is Non-specific ribonucleoside hydrolase RihC from Escherichia coli O157:H7.